The primary structure comprises 397 residues: Phosphoribulokinase, chloroplastic (397 aa).

The N-terminal 44 residues, 1–44, are a transit peptide targeting the chloroplast; it reads MAVSAYTVPTTSHLGFNQKKQLFFCNKSAYKRVSFSSRPCVITC. Residues cysteine 62 and cysteine 101 are joined by a disulfide bond.

Belongs to the phosphoribulokinase family.

The protein resides in the plastid. It localises to the chloroplast. It carries out the reaction D-ribulose 5-phosphate + ATP = D-ribulose 1,5-bisphosphate + ADP + H(+). It functions in the pathway carbohydrate biosynthesis; Calvin cycle. Light regulated via thioredoxin by reversible oxidation/reduction of sulfhydryl/disulfide groups. This chain is Phosphoribulokinase, chloroplastic, found in Mesembryanthemum crystallinum (Common ice plant).